A 530-amino-acid polypeptide reads, in one-letter code: Glutamate--tRNA ligase (530 aa).

The 'HIGH' region motif lies at 26–36 (PSPTGKAHIGT). The 'KMSKS' region motif lies at 267–271 (KLSKR). Residue lysine 270 coordinates ATP.

It belongs to the class-I aminoacyl-tRNA synthetase family. Glutamate--tRNA ligase type 1 subfamily. Monomer.

It is found in the cytoplasm. The catalysed reaction is tRNA(Glu) + L-glutamate + ATP = L-glutamyl-tRNA(Glu) + AMP + diphosphate. Functionally, catalyzes the attachment of glutamate to tRNA(Glu) in a two-step reaction: glutamate is first activated by ATP to form Glu-AMP and then transferred to the acceptor end of tRNA(Glu). In Gloeobacter violaceus (strain ATCC 29082 / PCC 7421), this protein is Glutamate--tRNA ligase.